The sequence spans 163 residues: R-phycoerythrin alpha chain (163 aa).

(2R,3E)-phycoerythrobilin contacts are provided by C82 and C139.

This sequence belongs to the phycobiliprotein family. As to quaternary structure, heterodimer of an alpha and a beta chain. Contains two covalently linked bilin chromophores.

The protein resides in the plastid. It localises to the chloroplast thylakoid membrane. Functionally, light-harvesting photosynthetic bile pigment-protein from the phycobiliprotein complex. This is R-phycoerythrin alpha chain (cpeA) from Aglaothamnion neglectum (Red alga).